The chain runs to 277 residues: Undecaprenyl-diphosphatase (277 aa).

6 consecutive transmembrane segments (helical) span residues 88–108, 117–137, 157–179, 191–211, 227–247, and 255–275; these read MGWL…LFQD, MWIV…ADAV, FAQA…AGLL, SFLL…YKVV, LATV…LKFV, and FVWY…FGVI.

Belongs to the UppP family.

It is found in the cell membrane. It catalyses the reaction di-trans,octa-cis-undecaprenyl diphosphate + H2O = di-trans,octa-cis-undecaprenyl phosphate + phosphate + H(+). In terms of biological role, catalyzes the dephosphorylation of undecaprenyl diphosphate (UPP). Confers resistance to bacitracin. This Pseudarthrobacter chlorophenolicus (strain ATCC 700700 / DSM 12829 / CIP 107037 / JCM 12360 / KCTC 9906 / NCIMB 13794 / A6) (Arthrobacter chlorophenolicus) protein is Undecaprenyl-diphosphatase.